The following is a 1055-amino-acid chain: Auxin response factor 16 (1055 aa).

The TF-B3 DNA-binding region spans 127–229; the sequence is FCKTLTASDT…QLLLGIRRAT (103 aa). Disordered stretches follow at residues 485–510, 532–565, 585–609, 701–720, and 732–769; these read PVMS…QQSS, QEHL…EQTS, SQLQ…PIAG, SDSI…LNHM, and SHSA…SRNL. Composition is skewed to low complexity over residues 488-510 and 532-552; these read SQHQ…QQSS and QEHL…ASSL. Residues 742–756 are compositionally biased toward low complexity; it reads PSSSTAPSTSRISPI. A compositionally biased stretch (polar residues) spans 757–769; it reads NSLSRANQGSRNL. The region spanning 940 to 1024 is the PB1 domain; it reads RTFTKVQKRG…KSIKILSAAE (85 aa). The disordered stretch occupies residues 1034–1055; the sequence is LGGVPPQTQACSASDDANAWRG.

Belongs to the ARF family. As to quaternary structure, homodimers and heterodimers. As to expression, expressed in roots, culms, leaves and young panicles.

It localises to the nucleus. Its function is as follows. Auxin response factors (ARFs) are transcriptional factors that bind specifically to the DNA sequence 5'-TGTCTC-3' found in the auxin-responsive promoter elements (AuxREs). The sequence is that of Auxin response factor 16 (ARF16) from Oryza sativa subsp. japonica (Rice).